The sequence spans 449 residues: Agmatine hydroxycinnamoyltransferase 1 (449 aa).

Active-site proton acceptor residues include His153 and Asp392.

This sequence belongs to the plant acyltransferase family. Highly expressed in roots. Expressed at low levels in flowers.

Functionally, hydroxycinnamoyl transferase that catalyzes the transfer of an acyl from p-coumaryol-CoA to agmatine, to produce coumaroyl agmatine. Can use feruloyl-CoA, caffeoyl-CoA and sinapoyl-CoA as acyl donors. Seems to be able to transfer the acyl group from p-coumaroyl-CoA and feruloyl-CoA to the acyl acceptors putrescine and spermidine. This chain is Agmatine hydroxycinnamoyltransferase 1, found in Oryza sativa subsp. japonica (Rice).